Consider the following 581-residue polypeptide: MPLNSLHNLERKPSKAWSTSCTAPAARLQASFSLQQEEPRQIRRSGDYQPSLWDFNYIQSLNTPYKEQRYVNRQAELIMQVRMLLKVKMEAIQQLELIDDLQYLGLSYFFPDEIKQILSSIHNEHRYFHNNDLYLTALGFRILRQHGFNVSEDVFDCFKTEKCSDFNANLAQDTKGMLQLYEASFLLREGEDTLELARRFSTRSLREKLDEDGDEIDEDLSSWIRHSLDLPLHWRIQGLEARWFLDAYARRPDMNPLIFKLAKLNFNIVQATYQEELKDVSRWWNSSCLAEKLPFVRDRIVECFFWAIGAFEPHQYSYQRKMAAIIITFVTIIDDVYDVYGTLEELELFTDMIRRWDNISISQLPYYMQVCYLALYNFVSERAYDILKDQHFNSIPYLQRSWVSLVEGYLKEAYWYYNGYKPSLEEYLNNAKISISAPTIISQLYFTLANSTDETVIESLYEYHNILYLSGTILRLADDLGTSQHELERGDVPKAIQCYMKDTNASEREAVEHVKFLIRETWKEMNTVTTASDCPFTDDLVAVATNLARAAQFIYLDGDGHGVQHSEIHQQMGGLLFQPYV.

A chloroplast-targeting transit peptide spans 1-28; that stretch reads MPLNSLHNLERKPSKAWSTSCTAPAARL. Residues Arg-297, Asp-334, Asp-338, Arg-475, and Asp-478 each contribute to the (2E)-geranyl diphosphate site. Mg(2+)-binding residues include Asp-334 and Asp-338. The DDXXD motif signature appears at 334–338; it reads DDVYD. Positions 478, 482, and 486 each coordinate Mg(2+).

The protein belongs to the terpene synthase family. Tpsb subfamily. Requires Mg(2+) as cofactor. Mn(2+) serves as cofactor.

It is found in the plastid. The protein localises to the chloroplast. It carries out the reaction (2E)-geranyl diphosphate = sabinene + diphosphate. The enzyme catalyses (2E)-geranyl diphosphate = beta-myrcene + diphosphate. Its pathway is secondary metabolite biosynthesis; terpenoid biosynthesis. Its function is as follows. Monoterpene synthase (TPS) involved in the biosynthesis of monoterpene natural products, components of the chemical defense arsenal. Catalyzes the conversion of (2E)-geranyl diphosphate (GPP) into sabinene, and, as minor products, myrcene. In Salvia pomifera (Apple sage), this protein is Sabinene synthase 1, chloroplastic.